The chain runs to 678 residues: Penicillin-binding protein activator LpoA (678 aa).

The signal sequence occupies residues 1 to 26 (MVPSTFSRLKAARCLPVVLAALIFAG). The N-palmitoyl cysteine moiety is linked to residue Cys27. Cys27 carries the S-diacylglycerol cysteine lipid modification. The span at 300–310 (AADVAEQPQPQ) shows a compositional bias: low complexity. 2 disordered regions span residues 300-340 (AADV…PVSA) and 496-528 (ALTGSPITPRATTDSGMTTNNPTLQTTPTDDQF). Residues 311–327 (TADSVASPAQASVSDLT) show a composition bias toward polar residues. Low complexity-rich tracts occupy residues 330–340 (QPAAQPVPVSA) and 513–528 (TTNNPTLQTTPTDDQF).

The protein belongs to the LpoA family. Interacts with PBP1a.

It is found in the cell outer membrane. In terms of biological role, regulator of peptidoglycan synthesis that is essential for the function of penicillin-binding protein 1A (PBP1a). This is Penicillin-binding protein activator LpoA from Shigella flexneri serotype X (strain 2002017).